A 419-amino-acid chain; its full sequence is Transcription termination factor Rho (419 aa).

The Rho RNA-BD domain occupies 48–123; the sequence is DIFGDGVLEI…LKVNEVNYDK (76 aa). 3 RNA-binding regions span residues 61 to 66, 78 to 80, and 108 to 110; these read GFGFLR, DIY, and ERY. ATP is bound by residues 169 to 174, 181 to 186, and Arg-212; these read GRGQRG and KAGKTM. Positions 284–288 are RNA-binding 2; the sequence is VLTGG.

The protein belongs to the Rho family. As to quaternary structure, homohexamer. The homohexamer assembles into an open ring structure.

Facilitates transcription termination by a mechanism that involves Rho binding to the nascent RNA, activation of Rho's RNA-dependent ATPase activity, and release of the mRNA from the DNA template. The sequence is that of Transcription termination factor Rho from Salmonella typhi.